The sequence spans 278 residues: Small ribosomal subunit protein uS3 (278 aa).

The KH type-2 domain occupies 39-107 (LRKAIAKKYV…KVQLNIVEIS (69 aa)). The segment at 244–278 (AKPKRVTKKAEAEASAEEKPKRAAKKAENITKEEE) is disordered. Residues 251-278 (KKAEAEASAEEKPKRAAKKAENITKEEE) show a composition bias toward basic and acidic residues.

The protein belongs to the universal ribosomal protein uS3 family. In terms of assembly, part of the 30S ribosomal subunit. Forms a tight complex with proteins S10 and S14.

Binds the lower part of the 30S subunit head. Binds mRNA in the 70S ribosome, positioning it for translation. This is Small ribosomal subunit protein uS3 from Dehalococcoides mccartyi (strain ATCC BAA-2266 / KCTC 15142 / 195) (Dehalococcoides ethenogenes (strain 195)).